The primary structure comprises 137 residues: Large ribosomal subunit protein uL16 (137 aa).

It belongs to the universal ribosomal protein uL16 family. In terms of assembly, part of the 50S ribosomal subunit.

In terms of biological role, binds 23S rRNA and is also seen to make contacts with the A and possibly P site tRNAs. This chain is Large ribosomal subunit protein uL16, found in Leuconostoc citreum (strain KM20).